The primary structure comprises 458 residues: Probable M18 family aminopeptidase 1 (458 aa).

Residues His-95, His-170, and His-434 each contribute to the Zn(2+) site.

The protein belongs to the peptidase M18 family. Zn(2+) serves as cofactor.

This is Probable M18 family aminopeptidase 1 (apeA) from Borreliella burgdorferi (strain ATCC 35210 / DSM 4680 / CIP 102532 / B31) (Borrelia burgdorferi).